Here is a 310-residue protein sequence, read N- to C-terminus: Ribosomal RNA small subunit methyltransferase H (310 aa).

Residues Gly-32 to His-34, Asp-52, Phe-79, Asp-100, and Gln-107 contribute to the S-adenosyl-L-methionine site.

The protein belongs to the methyltransferase superfamily. RsmH family.

It is found in the cytoplasm. The enzyme catalyses cytidine(1402) in 16S rRNA + S-adenosyl-L-methionine = N(4)-methylcytidine(1402) in 16S rRNA + S-adenosyl-L-homocysteine + H(+). Functionally, specifically methylates the N4 position of cytidine in position 1402 (C1402) of 16S rRNA. The sequence is that of Ribosomal RNA small subunit methyltransferase H from Bacillus cereus (strain ATCC 10987 / NRS 248).